Here is a 353-residue protein sequence, read N- to C-terminus: Phospho-N-acetylmuramoyl-pentapeptide-transferase (353 aa).

The next 10 membrane-spanning stretches (helical) occupy residues 24–44, 66–86, 88–108, 129–149, 160–180, 192–212, 229–249, 256–276, 281–301, and 330–350; these read LGFFIAFFLTLFLMPKFILWA, TPTMGGIVFVFATIVASVLCA, LGNLYVLLGMIVLVGFSFVGF, FGMLFVLSLVVSVLLSLKGLD, PLFEMPTILAVGFWVLVFLST, GLASVPSIFTLLSLSIFVYVA, VGELFVISLALVGSLFGFLWY, VFMGDSGSLALGGFIAYNAIV, ILLVLMGLIFVVETLSVILQV, and KVIVRFWIISMLSNLVALLSL.

This sequence belongs to the glycosyltransferase 4 family. MraY subfamily. Mg(2+) is required as a cofactor.

It localises to the cell inner membrane. It carries out the reaction UDP-N-acetyl-alpha-D-muramoyl-L-alanyl-gamma-D-glutamyl-meso-2,6-diaminopimeloyl-D-alanyl-D-alanine + di-trans,octa-cis-undecaprenyl phosphate = di-trans,octa-cis-undecaprenyl diphospho-N-acetyl-alpha-D-muramoyl-L-alanyl-D-glutamyl-meso-2,6-diaminopimeloyl-D-alanyl-D-alanine + UMP. It participates in cell wall biogenesis; peptidoglycan biosynthesis. Functionally, catalyzes the initial step of the lipid cycle reactions in the biosynthesis of the cell wall peptidoglycan: transfers peptidoglycan precursor phospho-MurNAc-pentapeptide from UDP-MurNAc-pentapeptide onto the lipid carrier undecaprenyl phosphate, yielding undecaprenyl-pyrophosphoryl-MurNAc-pentapeptide, known as lipid I. The chain is Phospho-N-acetylmuramoyl-pentapeptide-transferase from Helicobacter pylori (strain Shi470).